A 148-amino-acid chain; its full sequence is MARALCRLPRRGLWLLLAHHLFMTTACQEANYGALLRELCLTQFQVDMEAVGETLWCDWGRTIRSYRELADCTWHMAEKLGCFWPNAEVDRFFLAVHGRYFRSCPISGRAVRDPPGSILYPFIVVPITVTLLVTALVVWQSKRTEGIV.

Residues 1 to 26 form the signal peptide; sequence MARALCRLPRRGLWLLLAHHLFMTTA. 3 disulfides stabilise this stretch: cysteine 27–cysteine 82, cysteine 40–cysteine 72, and cysteine 57–cysteine 104. Over 27-118 the chain is Extracellular; it reads CQEANYGALL…RAVRDPPGSI (92 aa). A helical transmembrane segment spans residues 119 to 140; it reads LYPFIVVPITVTLLVTALVVWQ. Residues 141 to 148 lie on the Cytoplasmic side of the membrane; sequence SKRTEGIV.

This sequence belongs to the RAMP family. Heterodimer of CALCRL and RAMP1; the interaction induces allosteric modulation of CALCRL function and CGRP1/CALCA and CGRP2/CALCB ligand specificity. Heterodimer of CALCR and RAMP1; interaction forms the AMYR1 receptor complex for amylin/IAPP and CGRP1/CALCA ligands. As to expression, expressed in many tissues including the uterus, bladder, brain, pancreas and gastro-intestinal tract.

It localises to the cell membrane. Functionally, accessory protein that interacts with and modulates the function of G-protein coupled receptors including calcitonin gene-related peptide type 1 receptor (CALCRL) and calcitonin receptor (CALCR). Required for the transport of CALCRL to the plasma membrane. Together with CALCRL, form the receptor complex for the calcitonin gene-related peptides CGRP1/CALCA and CGRP2/CALCB. Together with CALCR, form the AMYR1 receptor complex for amylin/IAPP and CGRP1/CALCA. In Homo sapiens (Human), this protein is Receptor activity-modifying protein 1.